A 98-amino-acid chain; its full sequence is ESAT-6-like protein EsxW (98 aa).

It belongs to the WXG100 family. CFP-10 subfamily. Forms a tight 1:1 complex with EsxV. The complex is destabilized at low pH. Unfolding of the proteins is required for dissociation of the complex and membrane binding.

The protein resides in the secreted. The protein is ESAT-6-like protein EsxW of Mycobacterium tuberculosis (strain ATCC 25618 / H37Rv).